A 218-amino-acid chain; its full sequence is Ras-related protein RABA1i (218 aa).

20–27 (GDSGVGKS) lines the GTP pocket. Residues 42-50 (SRATIGVEF) carry the Effector region motif. Residues 68 to 72 (DTAGQ), 126 to 129 (NKAD), and 156 to 157 (SA) contribute to the GTP site. 2 S-geranylgeranyl cysteine lipidation sites follow: C215 and C216.

Belongs to the small GTPase superfamily. Rab family.

Its subcellular location is the cell membrane. Functionally, intracellular vesicle trafficking and protein transport. The chain is Ras-related protein RABA1i (RABA1I) from Arabidopsis thaliana (Mouse-ear cress).